A 319-amino-acid chain; its full sequence is MQNRNISYWIKKCVIQSISIVILMKIIAWPSISEAYPIFAQQAYEDPREATGRIVCANCHLAKKPVDIEVPQSVLPDTVFEAVVKIPYDMQIKQVLANGKKGALNVGAVLILPKGFELAPADRIPPEMKEKIGNLYFQPYSSDKKNILVIGPVPGKKYSEMVFPILSPDPAVNKEANFLKYPIYLGANRGRGQIYPDGSKSNNTVYNASAAGTVSKIFRKEKGGYEITIDTQDGRQIVDIVPAGPELIISEGELIKADQPLTNNPNVGGFGQGDAEIVLQDPLRVQSLLVFFVSVTLAQIFLVLKKKQFEKVQLAEMNF.

The signal sequence occupies residues 1–35; it reads MQNRNISYWIKKCVIQSISIVILMKIIAWPSISEA. Tyr36, Cys56, Cys59, and His60 together coordinate heme. A helical transmembrane segment spans residues 285–305; it reads VQSLLVFFVSVTLAQIFLVLK.

It belongs to the cytochrome f family. In terms of assembly, the 4 large subunits of the cytochrome b6-f complex are cytochrome b6, subunit IV (17 kDa polypeptide, petD), cytochrome f and the Rieske protein, while the 4 small subunits are PetG, PetL, PetM and PetN. The complex functions as a dimer. The cofactor is heme.

It is found in the plastid. The protein localises to the chloroplast thylakoid membrane. Functionally, component of the cytochrome b6-f complex, which mediates electron transfer between photosystem II (PSII) and photosystem I (PSI), cyclic electron flow around PSI, and state transitions. This is Cytochrome f from Physcomitrium patens (Spreading-leaved earth moss).